Consider the following 162-residue polypeptide: G/U mismatch-specific DNA glycosylase (162 aa).

The protein belongs to the uracil-DNA glycosylase (UDG) superfamily. TDG/mug family. Binds DNA as a monomer.

The protein localises to the cytoplasm. It carries out the reaction Specifically hydrolyzes mismatched double-stranded DNA and polynucleotides, releasing free uracil.. In terms of biological role, excises ethenocytosine and uracil, which can arise by alkylation or deamination of cytosine, respectively, from the corresponding mispairs with guanine in ds-DNA. It is capable of hydrolyzing the carbon-nitrogen bond between the sugar-phosphate backbone of the DNA and the mispaired base. The complementary strand guanine functions in substrate recognition. Required for DNA damage lesion repair in stationary-phase cells. In Serratia proteamaculans (strain 568), this protein is G/U mismatch-specific DNA glycosylase.